A 505-amino-acid chain; its full sequence is Cytochrome P450 CYP71D313 (505 aa).

The helical transmembrane segment at 1 to 21 (MELQFPLFSIFFVTILFFFLF) threads the bilayer. Cys441 is a heme binding site. Residues 442-462 (PGIAFGIATIELPLALLLYHF) form a helical membrane-spanning segment.

The protein belongs to the cytochrome P450 family. It depends on heme as a cofactor.

It is found in the membrane. In terms of biological role, probable heme-thiolate monooxygenase. The sequence is that of Cytochrome P450 CYP71D313 from Panax ginseng (Korean ginseng).